Reading from the N-terminus, the 587-residue chain is Arginine--tRNA ligase (587 aa).

The short motif at 127 to 137 (ANPTGPLHVGH) is the 'HIGH' region element.

It belongs to the class-I aminoacyl-tRNA synthetase family. In terms of assembly, monomer.

The protein resides in the cytoplasm. The enzyme catalyses tRNA(Arg) + L-arginine + ATP = L-arginyl-tRNA(Arg) + AMP + diphosphate. This Dechloromonas aromatica (strain RCB) protein is Arginine--tRNA ligase.